Consider the following 327-residue polypeptide: Biotin synthase (327 aa).

In terms of domain architecture, Radical SAM core spans 52-279 (TKVQLSTLVS…ASYVRLSAGR (228 aa)). Positions 67, 71, and 74 each coordinate [4Fe-4S] cluster. [2Fe-2S] cluster is bound by residues C111, C142, C202, and R274.

The protein belongs to the radical SAM superfamily. Biotin synthase family. As to quaternary structure, homodimer. Requires [4Fe-4S] cluster as cofactor. [2Fe-2S] cluster is required as a cofactor.

It carries out the reaction (4R,5S)-dethiobiotin + (sulfur carrier)-SH + 2 reduced [2Fe-2S]-[ferredoxin] + 2 S-adenosyl-L-methionine = (sulfur carrier)-H + biotin + 2 5'-deoxyadenosine + 2 L-methionine + 2 oxidized [2Fe-2S]-[ferredoxin]. The protein operates within cofactor biosynthesis; biotin biosynthesis; biotin from 7,8-diaminononanoate: step 2/2. Functionally, catalyzes the conversion of dethiobiotin (DTB) to biotin by the insertion of a sulfur atom into dethiobiotin via a radical-based mechanism. The polypeptide is Biotin synthase (Chromobacterium violaceum (strain ATCC 12472 / DSM 30191 / JCM 1249 / CCUG 213 / NBRC 12614 / NCIMB 9131 / NCTC 9757 / MK)).